The chain runs to 131 residues: Peptide methionine sulfoxide reductase MsrB (131 aa).

Positions 8-130 constitute a MsrB domain; that stretch reads LDEWRSMLDP…NSVCIDLRPR (123 aa). Cys47, Cys50, Cys96, and Cys99 together coordinate Zn(2+). Catalysis depends on Cys119, which acts as the Nucleophile.

The protein belongs to the MsrB Met sulfoxide reductase family. Zn(2+) serves as cofactor.

It carries out the reaction L-methionyl-[protein] + [thioredoxin]-disulfide + H2O = L-methionyl-(R)-S-oxide-[protein] + [thioredoxin]-dithiol. The sequence is that of Peptide methionine sulfoxide reductase MsrB from Pseudomonas putida (strain ATCC 700007 / DSM 6899 / JCM 31910 / BCRC 17059 / LMG 24140 / F1).